The following is a 195-amino-acid chain: Large ribosomal subunit protein uL18 (195 aa).

It belongs to the universal ribosomal protein uL18 family. Part of the 50S ribosomal subunit. Contacts the 5S and 23S rRNAs.

Its function is as follows. This is one of the proteins that bind and probably mediate the attachment of the 5S RNA into the large ribosomal subunit, where it forms part of the central protuberance. The chain is Large ribosomal subunit protein uL18 from Metallosphaera sedula (strain ATCC 51363 / DSM 5348 / JCM 9185 / NBRC 15509 / TH2).